Here is a 281-residue protein sequence, read N- to C-terminus: Endochitinase At2g43610 (281 aa).

The signal sequence occupies residues 1–28 (MATQNAILKKALIIFLFTLTIMTGTAFS). The Chitin-binding type-1 domain occupies 29–66 (QNCGTNGCKGNMCCSRWGYCGTTKAYCGTGCQSGPCNS). 4 disulfide bridges follow: cysteine 31-cysteine 42, cysteine 36-cysteine 48, cysteine 41-cysteine 55, and cysteine 59-cysteine 64. The tract at residues 86-281 (GTIASVITPA…GVTPGTNLSC (196 aa)) is catalytic. Catalysis depends on glutamate 148, which acts as the Proton donor. Asparagine 278 carries N-linked (GlcNAc...) asparagine glycosylation.

This sequence belongs to the glycosyl hydrolase 19 family. Chitinase class I subfamily.

It catalyses the reaction Random endo-hydrolysis of N-acetyl-beta-D-glucosaminide (1-&gt;4)-beta-linkages in chitin and chitodextrins.. The protein is Endochitinase At2g43610 of Arabidopsis thaliana (Mouse-ear cress).